Consider the following 1407-residue polypeptide: DNA-directed RNA polymerase subunit beta' (1407 aa).

Zn(2+) is bound by residues Cys70, Cys72, Cys85, and Cys88. Mg(2+) is bound by residues Asp460, Asp462, and Asp464. Position 972 is an N6-acetyllysine (Lys972).

Belongs to the RNA polymerase beta' chain family. As to quaternary structure, the RNAP catalytic core consists of 2 alpha, 1 beta, 1 beta' and 1 omega subunit. When a sigma factor is associated with the core the holoenzyme is formed, which can initiate transcription. It depends on Mg(2+) as a cofactor. The cofactor is Zn(2+).

The enzyme catalyses RNA(n) + a ribonucleoside 5'-triphosphate = RNA(n+1) + diphosphate. In terms of biological role, DNA-dependent RNA polymerase catalyzes the transcription of DNA into RNA using the four ribonucleoside triphosphates as substrates. The chain is DNA-directed RNA polymerase subunit beta' from Escherichia coli O6:K15:H31 (strain 536 / UPEC).